The following is a 79-amino-acid chain: Sec-independent protein translocase protein TatA (79 aa).

The chain crosses the membrane as a helical span at residues 1–21 (MGSLSIWHWIVVIAVILLLFG). A compositionally biased stretch (basic and acidic residues) spans 43-60 (MQDDEKTAEKPEPVKTID). The segment at 43-79 (MQDDEKTAEKPEPVKTIDHNAPAPGASRSDVGSKTTV) is disordered.

The protein belongs to the TatA/E family. In terms of assembly, the Tat system comprises two distinct complexes: a TatABC complex, containing multiple copies of TatA, TatB and TatC subunits, and a separate TatA complex, containing only TatA subunits. Substrates initially bind to the TatABC complex, which probably triggers association of the separate TatA complex to form the active translocon.

Its subcellular location is the cell inner membrane. Its function is as follows. Part of the twin-arginine translocation (Tat) system that transports large folded proteins containing a characteristic twin-arginine motif in their signal peptide across membranes. TatA could form the protein-conducting channel of the Tat system. The protein is Sec-independent protein translocase protein TatA of Nitrobacter hamburgensis (strain DSM 10229 / NCIMB 13809 / X14).